The following is a 577-amino-acid chain: Type I restriction enzyme MjaVII methylase subunit (577 aa).

Residues 251–256, 281–283, Glu-306, and 335–336 contribute to the S-adenosyl-L-methionine site; these read EVYTPV, SGT, and DS.

It belongs to the N4/N6-methyltransferase family. As to quaternary structure, the type I restriction/modification system is composed of three polypeptides R, M and S.

The enzyme catalyses a 2'-deoxyadenosine in DNA + S-adenosyl-L-methionine = an N(6)-methyl-2'-deoxyadenosine in DNA + S-adenosyl-L-homocysteine + H(+). The subtype gamma methyltransferase (M) subunit of a type I restriction enzyme. The M and S subunits together form a methyltransferase (MTase) that methylates A-3 on the top and bottom strands of the sequence 5'-CAAN(7)TGG-3'. In the presence of the R subunit the complex can also act as an endonuclease, binding to the same target sequence but cutting the DNA some distance from this site. Whether the DNA is cut or modified depends on the methylation state of the target sequence. When the target site is unmodified, the DNA is cut. When the target site is hemimethylated, the complex acts as a maintenance MTase modifying the DNA so that both strands become methylated. After locating a non-methylated recognition site, the enzyme complex serves as a molecular motor that translocates DNA in an ATP-dependent manner until a collision occurs that triggers cleavage. This is Type I restriction enzyme MjaVII methylase subunit from Methanocaldococcus jannaschii (strain ATCC 43067 / DSM 2661 / JAL-1 / JCM 10045 / NBRC 100440) (Methanococcus jannaschii).